The sequence spans 232 residues: Large ribosomal subunit protein uL1 (232 aa).

It belongs to the universal ribosomal protein uL1 family. In terms of assembly, part of the 50S ribosomal subunit.

In terms of biological role, binds directly to 23S rRNA. The L1 stalk is quite mobile in the ribosome, and is involved in E site tRNA release. Its function is as follows. Protein L1 is also a translational repressor protein, it controls the translation of the L11 operon by binding to its mRNA. This chain is Large ribosomal subunit protein uL1, found in Paraburkholderia phytofirmans (strain DSM 17436 / LMG 22146 / PsJN) (Burkholderia phytofirmans).